Here is a 100-residue protein sequence, read N- to C-terminus: uncharacterized protein (100 aa).

A run of 3 helical transmembrane segments spans residues 11-33 (VWSI…SVLM), 45-64 (WMLA…SLVY), and 68-90 (WEGA…GYLI).

Its subcellular location is the cell membrane. This is an uncharacterized protein from Bacillus subtilis (strain 168).